Consider the following 351-residue polypeptide: Phosphoribosylformylglycinamidine cyclo-ligase (351 aa).

This sequence belongs to the AIR synthase family.

It is found in the cytoplasm. It carries out the reaction 2-formamido-N(1)-(5-O-phospho-beta-D-ribosyl)acetamidine + ATP = 5-amino-1-(5-phospho-beta-D-ribosyl)imidazole + ADP + phosphate + H(+). Its pathway is purine metabolism; IMP biosynthesis via de novo pathway; 5-amino-1-(5-phospho-D-ribosyl)imidazole from N(2)-formyl-N(1)-(5-phospho-D-ribosyl)glycinamide: step 2/2. In Burkholderia mallei (strain NCTC 10247), this protein is Phosphoribosylformylglycinamidine cyclo-ligase.